The primary structure comprises 910 residues: Aconitate hydratase A (910 aa).

[4Fe-4S] cluster is bound by residues C454, C520, and C523.

The protein belongs to the aconitase/IPM isomerase family. As to quaternary structure, monomer. It depends on [4Fe-4S] cluster as a cofactor.

The catalysed reaction is citrate = D-threo-isocitrate. The enzyme catalyses (2S,3R)-3-hydroxybutane-1,2,3-tricarboxylate = 2-methyl-cis-aconitate + H2O. It participates in carbohydrate metabolism; tricarboxylic acid cycle; isocitrate from oxaloacetate: step 2/2. Its pathway is organic acid metabolism; propanoate degradation. In terms of biological role, involved in the catabolism of short chain fatty acids (SCFA) via the tricarboxylic acid (TCA)(acetyl degradation route) and probably the 2-methylcitrate cycle I (propionate degradation route). Catalyzes the reversible isomerization of citrate to isocitrate via cis-aconitate. Could catalyze the hydration of 2-methyl-cis-aconitate to yield (2R,3S)-2-methylisocitrate. The apo form of AcnA functions as a RNA-binding regulatory protein. The polypeptide is Aconitate hydratase A (acnA) (Pseudomonas aeruginosa (strain ATCC 15692 / DSM 22644 / CIP 104116 / JCM 14847 / LMG 12228 / 1C / PRS 101 / PAO1)).